The sequence spans 139 residues: Large ribosomal subunit protein uL16 (139 aa).

Basic residues predominate over residues 1-19; sequence MLIPRRVKYRKQHHPKRTG. Positions 1 to 23 are disordered; it reads MLIPRRVKYRKQHHPKRTGAAKG.

It belongs to the universal ribosomal protein uL16 family. In terms of assembly, part of the 50S ribosomal subunit.

Functionally, binds 23S rRNA and is also seen to make contacts with the A and possibly P site tRNAs. The polypeptide is Large ribosomal subunit protein uL16 (Cutibacterium acnes (strain DSM 16379 / KPA171202) (Propionibacterium acnes)).